The chain runs to 148 residues: MLDVVEIQKILPHRYPFLLVDRVVELEKGKSVKAYKNVSISEPVFEGHFPGHPIYPGVMIIEGMAQAGGVLAFLSSSEEEQEAAKDKVVYFMSIDKAKFRNPVRPGDKLEYHLEVIKHRGSIWVLDGKAYVDGNLVAEAELKAMIVDK.

H48 is a catalytic residue.

The protein belongs to the thioester dehydratase family. FabZ subfamily.

It is found in the cytoplasm. It catalyses the reaction a (3R)-hydroxyacyl-[ACP] = a (2E)-enoyl-[ACP] + H2O. Functionally, involved in unsaturated fatty acids biosynthesis. Catalyzes the dehydration of short chain beta-hydroxyacyl-ACPs and long chain saturated and unsaturated beta-hydroxyacyl-ACPs. In Nitratiruptor sp. (strain SB155-2), this protein is 3-hydroxyacyl-[acyl-carrier-protein] dehydratase FabZ.